A 183-amino-acid chain; its full sequence is Translation initiation factor IF-3 (183 aa).

The protein belongs to the IF-3 family. In terms of assembly, monomer.

It localises to the cytoplasm. Its function is as follows. IF-3 binds to the 30S ribosomal subunit and shifts the equilibrium between 70S ribosomes and their 50S and 30S subunits in favor of the free subunits, thus enhancing the availability of 30S subunits on which protein synthesis initiation begins. This Pseudomonas putida (strain W619) protein is Translation initiation factor IF-3.